The following is a 445-amino-acid chain: Cyclic GMP-AMP phosphodiesterase SMPDL3A (445 aa).

Positions 1-22 are cleaved as a signal peptide; that stretch reads MALLGNFLCCLLVAWLCGPGLG. Positions 42 and 44 each coordinate Zn(2+). Cys-59 and Cys-78 are joined by a disulfide. The N-linked (GlcNAc...) asparagine glycan is linked to Asn-66. Position 107 (Asp-107) interacts with Zn(2+). His-111 contacts ATP. Asn-128 carries N-linked (GlcNAc...) asparagine glycosylation. Asn-148 serves as a coordination point for Zn(2+). Residues Asn-148 and His-149 each contribute to the ATP site. N-linked (GlcNAc...) asparagine glycans are attached at residues Asn-219 and Asn-235. His-249 contributes to the Zn(2+) binding site. Position 257 (Tyr-257) interacts with ATP. Zn(2+) contacts are provided by His-290 and His-292. N-linked (GlcNAc...) asparagine glycosylation is found at Asn-353 and Asn-364. 2 disulfides stabilise this stretch: Cys-417–Cys-421 and Cys-427–Cys-440.

Belongs to the acid sphingomyelinase family. In terms of assembly, monomer. Homodimer; homodimerizes following 2',3'-cGAMP-binding. It depends on Zn(2+) as a cofactor. N-glycosylated. Detected in blood serum (at protein level).

The protein resides in the secreted. It catalyses the reaction 2',3'-cGAMP + H2O = 5'-pGpA(2'-5') + H(+). The catalysed reaction is 5'-pGpA(2'-5') + H2O = 5'-GpA(2'-5') + phosphate. The enzyme catalyses a ribonucleoside 5'-triphosphate + H2O = a ribonucleoside 5'-diphosphate + phosphate + H(+). It carries out the reaction ATP + H2O = ADP + phosphate + H(+). Its activity is regulated as follows. Requires micromolar levels of Zn(2+) for activity. Inhibited by millimolar levels of Zn(2+). In terms of biological role, cyclic-nucleotide phosphodiesterase that acts as a negative regulator of innate immunity by mediating degradation of 2',3'-cGAMP, thereby inhibiting the cGAS-STING signaling. Specifically linearizes 2',3'-cGAMP into 2'5'-bond pGpA and further hydrolyzes pGpA to produce GpA. Also has in vitro nucleotide phosphodiesterase activity with nucleoside triphosphates, such as ATP. Has in vitro activity with p-nitrophenyl-TMP. Has lower activity with nucleoside diphosphates, and no activity with nucleoside monophosphates. Has in vitro activity with CDP-choline, giving rise to CMP and phosphocholine. Has in vitro activity with CDP-ethanolamine. Does not have sphingomyelin phosphodiesterase activity. The polypeptide is Cyclic GMP-AMP phosphodiesterase SMPDL3A (Mus musculus (Mouse)).